A 105-amino-acid polypeptide reads, in one-letter code: MVKLIESKEAFQEALAAAGDKLVVVDFSATWCGPCKMIKPFFHSLCDKYSNVVFLEVDVDDCQDVAADCEVKCMPTFQFYKKGQKVGEFSGANKEKLEATITEFA.

The 104-residue stretch at 2–105 (VKLIESKEAF…KLEATITEFA (104 aa)) folds into the Thioredoxin domain. An N6-acetyllysine modification is found at K3. K8 carries the post-translational modification N6-succinyllysine. Residues C32 and C35 each act as nucleophile in the active site. The cysteines at positions 32 and 35 are disulfide-linked. K39 bears the N6-acetyllysine mark. An S-nitrosocysteine mark is found at C62 and C69. C73 is modified (S-nitrosocysteine; alternate). At K94 the chain carries N6-acetyllysine; alternate. Position 94 is an N6-succinyllysine; alternate (K94).

The protein belongs to the thioredoxin family. As to quaternary structure, homodimer; disulfide-linked. Interacts with TXNIP through the redox-active site. Interacts with MAP3K5 and CASP3. Interacts with APEX1; the interaction stimulates the FOS/JUN AP-1 DNA-binding activity in a redox-dependent manner. Post-translationally, in the fully reduced protein, both Cys-69 and Cys-73 are nitrosylated in response to nitric oxide (NO). When two disulfide bonds are present in the protein, only Cys-73 is nitrosylated. Cys-73 can serve as donor for nitrosylation of target proteins.

It is found in the nucleus. The protein resides in the cytoplasm. Its subcellular location is the secreted. Functionally, participates in various redox reactions through the reversible oxidation of its active center dithiol to a disulfide and catalyzes dithiol-disulfide exchange reactions. Plays a role in the reversible S-nitrosylation of cysteine residues in target proteins, and thereby contributes to the response to intracellular nitric oxide. Nitrosylates the active site Cys of CASP3 in response to nitric oxide (NO), and thereby inhibits caspase-3 activity. Induces the FOS/JUN AP-1 DNA binding activity in ionizing radiation (IR) cells through its oxidation/reduction status and stimulates AP-1 transcriptional activity. This chain is Thioredoxin (Txn), found in Rattus norvegicus (Rat).